We begin with the raw amino-acid sequence, 526 residues long: Cytochrome P450 52A5 (526 aa).

Residues 18–38 (WYVIVPLAIIIYKVFDYFYVL) traverse the membrane as a helical segment. Cys-473 contributes to the heme binding site.

Belongs to the cytochrome P450 family. Requires heme as cofactor.

The protein localises to the membrane. Functionally, together with an NADPH cytochrome P450 the enzyme system catalyzes the terminal hydroxylation as the first step in the assimilation of alkanes and fatty acids. The protein is Cytochrome P450 52A5 (CYP52A5) of Candida maltosa (Yeast).